Consider the following 689-residue polypeptide: Glycine--tRNA ligase beta subunit (689 aa).

The protein belongs to the class-II aminoacyl-tRNA synthetase family. As to quaternary structure, tetramer of two alpha and two beta subunits.

The protein localises to the cytoplasm. It catalyses the reaction tRNA(Gly) + glycine + ATP = glycyl-tRNA(Gly) + AMP + diphosphate. The polypeptide is Glycine--tRNA ligase beta subunit (Escherichia coli O139:H28 (strain E24377A / ETEC)).